The primary structure comprises 1066 residues: TBC1 domain family member 31 (1066 aa).

7 WD repeats span residues 33-74, 75-116, 117-157, 158-200, 201-248, 249-296, and 297-334; these read HNTS…LHGN, RFNL…TVTK, ELVS…LDTF, QRKR…CDTL, FCKY…ARQL, FRII…MQTC, and KLLF…NIYS. Residues 424–599 form the Rab-GAP TBC domain; it reads EYPTKYRMFI…KLFDNIFSNH (176 aa). Coiled-coil stretches lie at residues 728 to 861 and 914 to 948; these read QKQE…DLEE and NKCY…KWKE. Residues 989 to 998 are compositionally biased toward basic and acidic residues; that stretch reads CHKEEPRFQN. The tract at residues 989 to 1020 is disordered; it reads CHKEEPRFQNEQDSSCLPRTSQLNDSSEMDPS. Residues 999–1020 show a composition bias toward polar residues; that stretch reads EQDSSCLPRTSQLNDSSEMDPS. Positions 1053–1056 are mediates direct interaction with PJA2; that stretch reads RARH.

Interacts with PJA2; the interaction is direct and recruits PJA2 to centrosomes. Interacts with OFD1; regulates its activity in cilium assembly. Interacts with PRKACA.

Its subcellular location is the cytoplasm. The protein resides in the cytoskeleton. It is found in the microtubule organizing center. It localises to the centrosome. The protein localises to the centriolar satellite. Its subcellular location is the cilium basal body. Functionally, molecular adapter which is involved in cilium biogenesis. Part of a functional complex including OFD1 a centriolar protein involved in cilium assembly. Could regulate the cAMP-dependent phosphorylation of OFD1, and its subsequent ubiquitination by PJA2 which ultimately leads to its proteasomal degradation. In Homo sapiens (Human), this protein is TBC1 domain family member 31.